A 442-amino-acid chain; its full sequence is 6-phospho-alpha-glucosidase 1 (442 aa).

Residue 6–72 (FSVLIAGGGS…PEVEFLATTD (67 aa)) coordinates NAD(+). Residues arginine 95 and asparagine 149 each coordinate substrate. Cysteine 171 provides a ligand contact to Mn(2+). Catalysis depends on aspartate 172, which acts as the Proton donor. Residue histidine 202 coordinates Mn(2+). Tyrosine 265 serves as the catalytic Proton acceptor. A substrate-binding site is contributed by arginine 285.

The protein belongs to the glycosyl hydrolase 4 family. Homodimer. May also form homotetramer. Mn(2+) serves as cofactor. Co(2+) is required as a cofactor. Requires Ni(2+) as cofactor. It depends on Fe(2+) as a cofactor. The cofactor is Mg(2+). NAD(+) serves as cofactor.

It carries out the reaction alpha-maltose 6'-phosphate + H2O = D-glucose 6-phosphate + D-glucose. Its activity is regulated as follows. Is inhibited by EDTA in vitro. Its function is as follows. Is probably involved in the catabolism of alpha-glycosides accumulated via a phosphoenolpyruvate-dependent phosphotransferase system (PEP-PTS). Hydrolyzes a wide variety of 6-phospho-alpha-D-glucosides including the five isomeric derivatives of sucrose, i.e. trehalulose-6'-phosphate, turanose-6'-phosphate, maltulose-6'-phosphate, leucrose-6'-phosphate, and palatinose-6'-phosphate, but is not active on sucrose-6-phosphate. Can also hydrolyze maltose-6'-phosphate and methyl-alpha-glucose-6-phosphate, and poorly, trehalose-6-phosphate. Fails to hydrolyze beta-O-linked phosphorylated disaccharides such as cellobiose-6'-phosphate and gentiobiose-6'-phosphate. Does not seem to be involved in maltose catabolism. The protein is 6-phospho-alpha-glucosidase 1 (simA) of Lacticaseibacillus paracasei (strain ATCC 334 / BCRC 17002 / CCUG 31169 / CIP 107868 / KCTC 3260 / NRRL B-441) (Lactobacillus paracasei).